The sequence spans 138 residues: Nucleoside diphosphate kinase (138 aa).

Lys9, Phe57, Arg85, Thr91, Arg102, and Asn112 together coordinate ATP. His115 acts as the Pros-phosphohistidine intermediate in catalysis.

The protein belongs to the NDK family. As to quaternary structure, homotetramer. It depends on Mg(2+) as a cofactor.

It is found in the cytoplasm. The catalysed reaction is a 2'-deoxyribonucleoside 5'-diphosphate + ATP = a 2'-deoxyribonucleoside 5'-triphosphate + ADP. The enzyme catalyses a ribonucleoside 5'-diphosphate + ATP = a ribonucleoside 5'-triphosphate + ADP. Major role in the synthesis of nucleoside triphosphates other than ATP. The ATP gamma phosphate is transferred to the NDP beta phosphate via a ping-pong mechanism, using a phosphorylated active-site intermediate. This Desulforapulum autotrophicum (strain ATCC 43914 / DSM 3382 / VKM B-1955 / HRM2) (Desulfobacterium autotrophicum) protein is Nucleoside diphosphate kinase.